Here is a 525-residue protein sequence, read N- to C-terminus: Chromosomal replication initiator protein DnaA (525 aa).

Positions 1–71 (MNDFWQHCSA…SDLARDFWNA (71 aa)) are domain I, interacts with DnaA modulators. Positions 71–188 (APIEVQFVLD…GEADSMYERS (118 aa)) are domain II. Positions 160 to 182 (AAAGRRTWRPGPGAAPANGGEAD) are disordered. Residues 169-181 (PGPGAAPANGGEA) are compositionally biased toward low complexity. The segment at 189-405 (KLNPVLTFDN…GALRKILAYS (217 aa)) is domain III, AAA+ region. 4 residues coordinate ATP: glycine 233, glycine 235, lysine 236, and threonine 237. The tract at residues 406-525 (KFHGREISIE…LHVLEQTLKG (120 aa)) is domain IV, binds dsDNA.

The protein belongs to the DnaA family. In terms of assembly, oligomerizes as a right-handed, spiral filament on DNA at oriC.

It localises to the cytoplasm. Functionally, plays an essential role in the initiation and regulation of chromosomal replication. ATP-DnaA binds to the origin of replication (oriC) to initiate formation of the DNA replication initiation complex once per cell cycle. Binds the DnaA box (a 9 base pair repeat at the origin) and separates the double-stranded (ds)DNA. Forms a right-handed helical filament on oriC DNA; dsDNA binds to the exterior of the filament while single-stranded (ss)DNA is stabiized in the filament's interior. The ATP-DnaA-oriC complex binds and stabilizes one strand of the AT-rich DNA unwinding element (DUE), permitting loading of DNA polymerase. After initiation quickly degrades to an ADP-DnaA complex that is not apt for DNA replication. Binds acidic phospholipids. This Burkholderia ambifaria (strain ATCC BAA-244 / DSM 16087 / CCUG 44356 / LMG 19182 / AMMD) (Burkholderia cepacia (strain AMMD)) protein is Chromosomal replication initiator protein DnaA.